The chain runs to 275 residues: MAGVSSESLTAALVALEAKLPFASLQLAKELFGILGTVDSSAGLRRALTDPSRSGDEKSALVKQLFGGKVSTDAAEIASGLAGSRWASARDIGDALETLAASVVIAVAENKSAVSASGITGLEALENDLFAFNHAVDSSHEVQRALSEPQASPAAKIALAEKLVPNASEEAKVLIGQAVSHPRGLKATNLVRRFAELAAKRQQRWIATVSVTRPLTESQTGRLQAGLNALYGRELKINMNVDPALIGGIRIQVGDEVVDASLLTRLGQLQRQLAG.

The protein belongs to the ATPase delta chain family. F-type ATPases have 2 components, F(1) - the catalytic core - and F(0) - the membrane proton channel. F(1) has five subunits: alpha(3), beta(3), gamma(1), delta(1), epsilon(1). F(0) has three main subunits: a(1), b(2) and c(10-14). The alpha and beta chains form an alternating ring which encloses part of the gamma chain. F(1) is attached to F(0) by a central stalk formed by the gamma and epsilon chains, while a peripheral stalk is formed by the delta and b chains.

It localises to the cell membrane. Its function is as follows. F(1)F(0) ATP synthase produces ATP from ADP in the presence of a proton or sodium gradient. F-type ATPases consist of two structural domains, F(1) containing the extramembraneous catalytic core and F(0) containing the membrane proton channel, linked together by a central stalk and a peripheral stalk. During catalysis, ATP synthesis in the catalytic domain of F(1) is coupled via a rotary mechanism of the central stalk subunits to proton translocation. This protein is part of the stalk that links CF(0) to CF(1). It either transmits conformational changes from CF(0) to CF(1) or is implicated in proton conduction. The sequence is that of ATP synthase subunit delta from Arthrobacter sp. (strain FB24).